Reading from the N-terminus, the 360-residue chain is Histidinol-phosphate aminotransferase (360 aa).

Residue lysine 221 is modified to N6-(pyridoxal phosphate)lysine.

The protein belongs to the class-II pyridoxal-phosphate-dependent aminotransferase family. Histidinol-phosphate aminotransferase subfamily. In terms of assembly, homodimer. Requires pyridoxal 5'-phosphate as cofactor.

It carries out the reaction L-histidinol phosphate + 2-oxoglutarate = 3-(imidazol-4-yl)-2-oxopropyl phosphate + L-glutamate. It functions in the pathway amino-acid biosynthesis; L-histidine biosynthesis; L-histidine from 5-phospho-alpha-D-ribose 1-diphosphate: step 7/9. The protein is Histidinol-phosphate aminotransferase of Desulfitobacterium hafniense (strain DSM 10664 / DCB-2).